A 350-amino-acid polypeptide reads, in one-letter code: MPSTVASIRDYSNIPKSKREEIANGPGLEDFIVKSPTSLNTLFIYYSNFSLPLPPWLKTTIPTSNSYNKLNKDLRNLKLHTVCEEARCPNIGECWGGESGTATATIMVLGDTCTRGCRFCSVKTARKPPPPDPDEPVNTAIALAQWGLDYVVLTSVDRDDLSDGGSNHFAETVKEIKKRNLSMLVETLTPDFRGDKAAIATVVNAGVDVYAHNVETVKNLQWLVRDPRANYEQSLEVLSYAKIVNPNLVTKTSIMLGLGETDESILQTMKDLRSIDVDCITLGQYMQPTRYHIKVKEYVTPAKFQHWEKVGNELGFAYTASGPLVRSSYKAGEFYLKNLVHKRNKTNGSD.

Residues Cys-83, Cys-88, Cys-94, Cys-113, Cys-117, Cys-120, and Ser-328 each coordinate [4Fe-4S] cluster. The Radical SAM core domain occupies 96 to 317 (GGESGTATAT…EKVGNELGFA (222 aa)).

It belongs to the radical SAM superfamily. Lipoyl synthase family. Requires [4Fe-4S] cluster as cofactor.

It localises to the mitochondrion. The catalysed reaction is [[Fe-S] cluster scaffold protein carrying a second [4Fe-4S](2+) cluster] + N(6)-octanoyl-L-lysyl-[protein] + 2 oxidized [2Fe-2S]-[ferredoxin] + 2 S-adenosyl-L-methionine + 4 H(+) = [[Fe-S] cluster scaffold protein] + N(6)-[(R)-dihydrolipoyl]-L-lysyl-[protein] + 4 Fe(3+) + 2 hydrogen sulfide + 2 5'-deoxyadenosine + 2 L-methionine + 2 reduced [2Fe-2S]-[ferredoxin]. The protein operates within protein modification; protein lipoylation via endogenous pathway; protein N(6)-(lipoyl)lysine from octanoyl-[acyl-carrier-protein]: step 2/2. Catalyzes the radical-mediated insertion of two sulfur atoms into the C-6 and C-8 positions of the octanoyl moiety bound to the lipoyl domains of lipoate-dependent enzymes, thereby converting the octanoylated domains into lipoylated derivatives. This chain is Lipoyl synthase, mitochondrial, found in Trichoplax adhaerens (Trichoplax reptans).